The chain runs to 357 residues: Protein phosphatase 1 regulatory subunit 42 (357 aa).

LRR repeat units lie at residues 29–50 (KITHINFSDKNIDAIEDLSLCK), 51–72 (NLSVLYLYDNCISQITNLNYAT), 73–94 (NLTHLYLQNNCIPCIENLRSLK), 95–116 (KLEKLYLGGNYIAVIEGLEGLG), 117–138 (ELRELHVENQRLPLGEKLLFDP), 147–168 (SLSILNISNNNIDDIRDLEILE), and 169–190 (NLNQLIAVDNQLLHVKDLEFLL). In terms of domain architecture, LRRCT spans 204 to 242 (NPVCLKPKYRDRLILVSKSLEFLDGKEIKNIERQFLMNW).

Interacts with PPP1CC isoform gamma-2; the interaction is direct. Interacts with actin, dynein, KIF5B, KIFC1 and tubulin. Associates with microtubules. In terms of processing, phosphorylated; in the testis.

The protein localises to the cytoplasm. It is found in the cytoskeleton. The protein resides in the microtubule organizing center. It localises to the centrosome. In terms of biological role, regulates phosphatase activity of protein phosphatase 1 (PP1) complexes in the testis. This Macaca fascicularis (Crab-eating macaque) protein is Protein phosphatase 1 regulatory subunit 42 (PPP1R42).